We begin with the raw amino-acid sequence, 66 residues long: DNA-directed RNA polymerase subunit Rpo10 (66 aa).

4 residues coordinate Zn(2+): C7, C10, C44, and C45.

It belongs to the archaeal Rpo10/eukaryotic RPB10 RNA polymerase subunit family. In terms of assembly, part of the RNA polymerase complex. Zn(2+) serves as cofactor.

The protein resides in the cytoplasm. The catalysed reaction is RNA(n) + a ribonucleoside 5'-triphosphate = RNA(n+1) + diphosphate. DNA-dependent RNA polymerase (RNAP) catalyzes the transcription of DNA into RNA using the four ribonucleoside triphosphates as substrates. The protein is DNA-directed RNA polymerase subunit Rpo10 of Pyrobaculum neutrophilum (strain DSM 2338 / JCM 9278 / NBRC 100436 / V24Sta) (Thermoproteus neutrophilus).